The sequence spans 269 residues: Energy-coupling factor transporter transmembrane protein EcfT (269 aa).

6 consecutive transmembrane segments (helical) span residues 45-65 (RFFLGWGVLLAFIVFLSRVSL), 75-95 (VLWLLVFTVLLHALFTPGEAI), 110-130 (MAALMGVRLVLLVAFAGLLTL), 153-173 (FPAHEMAMMMTIALRFIPTLL), 202-222 (FVPVLVPLFLIVFQRAEDLAL), and 244-264 (CLEDWVALGLMSVSVAGLLFL).

Belongs to the energy-coupling factor EcfT family. In terms of assembly, forms a stable energy-coupling factor (ECF) transporter complex composed of 2 membrane-embedded substrate-binding proteins (S component), 2 ATP-binding proteins (A component) and 2 transmembrane proteins (T component). May be able to interact with more than 1 S component at a time.

It localises to the cell membrane. Transmembrane (T) component of an energy-coupling factor (ECF) ABC-transporter complex. Unlike classic ABC transporters this ECF transporter provides the energy necessary to transport a number of different substrates. This chain is Energy-coupling factor transporter transmembrane protein EcfT, found in Thermanaerovibrio acidaminovorans (strain ATCC 49978 / DSM 6589 / Su883) (Selenomonas acidaminovorans).